Here is a 213-residue protein sequence, read N- to C-terminus: MQAYQRDFIRFAIDRGVLRFGEFTLKSGRTSPYFFNAGLFNTGSALAQLGRFYAAAVVESGIRFDVLFGPAYKGIPLASATAVALAEHHDRDLPWCFNRKEAKAHGEGGSLVGSPLAGNVLIIDDVITAGTAIREVMQIIKDQDATAAGVLIALNRQERGNGELSAIQEVERDFGIPVVSIVSLNQVLEFLADDEQLKQHLPAVEAYRAQYGI.

Position 26 (lysine 26) interacts with 5-phospho-alpha-D-ribose 1-diphosphate. 34-35 (FF) is an orotate binding site. Residues 72–73 (YK), arginine 99, lysine 100, lysine 103, histidine 105, and 124–132 (DDVITAGTA) each bind 5-phospho-alpha-D-ribose 1-diphosphate. Residues threonine 128 and arginine 156 each contribute to the orotate site.

This sequence belongs to the purine/pyrimidine phosphoribosyltransferase family. PyrE subfamily. As to quaternary structure, homodimer. Mg(2+) serves as cofactor.

The catalysed reaction is orotidine 5'-phosphate + diphosphate = orotate + 5-phospho-alpha-D-ribose 1-diphosphate. It functions in the pathway pyrimidine metabolism; UMP biosynthesis via de novo pathway; UMP from orotate: step 1/2. In terms of biological role, catalyzes the transfer of a ribosyl phosphate group from 5-phosphoribose 1-diphosphate to orotate, leading to the formation of orotidine monophosphate (OMP). This Pseudomonas syringae pv. tomato (strain ATCC BAA-871 / DC3000) protein is Orotate phosphoribosyltransferase.